The primary structure comprises 148 residues: Deoxyuridine 5'-triphosphate nucleotidohydrolase (148 aa).

Substrate contacts are provided by residues 65–67, Asn78, 82–84, and Lys92; these read RSG and TID.

The protein belongs to the dUTPase family. Mg(2+) is required as a cofactor.

It carries out the reaction dUTP + H2O = dUMP + diphosphate + H(+). The protein operates within pyrimidine metabolism; dUMP biosynthesis; dUMP from dCTP (dUTP route): step 2/2. This enzyme is involved in nucleotide metabolism: it produces dUMP, the immediate precursor of thymidine nucleotides and it decreases the intracellular concentration of dUTP so that uracil cannot be incorporated into DNA. The protein is Deoxyuridine 5'-triphosphate nucleotidohydrolase of Chlorobium phaeovibrioides (strain DSM 265 / 1930) (Prosthecochloris vibrioformis (strain DSM 265)).